The chain runs to 318 residues: Pyrimidine-specific ribonucleoside hydrolase RihA (318 aa).

His240 is an active-site residue.

Belongs to the IUNH family. RihA subfamily.

Hydrolyzes cytidine or uridine to ribose and cytosine or uracil, respectively. The sequence is that of Pyrimidine-specific ribonucleoside hydrolase RihA from Shewanella sp. (strain MR-4).